Here is a 755-residue protein sequence, read N- to C-terminus: Subtilisin-like protease 4 (755 aa).

The N-terminal stretch at 1–20 is a signal peptide; the sequence is MDYFLFIALTFLLTFHVHNA. Residues 41-119 form the Inhibitor I9 domain; that stretch reads YIIHVTGPEG…ISAHPQRVLH (79 aa). Positions 128–611 constitute a Peptidase S8 domain; it reads FLGLQQDTGV…SGHVNPSRAN (484 aa). The Charge relay system role is filled by Asp153. N-linked (GlcNAc...) asparagine glycosylation is present at Asn182. The active-site Charge relay system is His217. 5 N-linked (GlcNAc...) asparagine glycosylation sites follow: Asn297, Asn325, Asn393, Asn468, and Asn529. The PA domain maps to 376 to 461; sequence PLAYAGKNGK…ATHVSYAAGI (86 aa). The Charge relay system role is filled by Ser544. Residues Asn706 and Asn727 are each glycosylated (N-linked (GlcNAc...) asparagine).

It belongs to the peptidase S8 family.

It localises to the secreted. Its subcellular location is the extracellular space. The protein resides in the apoplast. Required for arbuscular mycorrhiza (AM) development during AM symbiosis with AM fungi (e.g. Glomeromycota intraradices). In Lotus japonicus (Lotus corniculatus var. japonicus), this protein is Subtilisin-like protease 4.